The following is a 252-amino-acid chain: MTAEKREAKVVLVDIEGTTTSISFVHQVLFPHAKENVEKYLKEYWENEETKQIVEDLQQVPQYADYQATLSAPPAVVDVKVIAGFVRYLIDKDLKVTPMKTLQGLIWACGYASGELKGHVYEDVPDAFRAWQKAGLRIAVYSSGSVDAQKLIFGYSVAGNLLPYLSDHFDTHVGHKQEQQSYVNISNSLREKPQNILFLTDIPGEASAALSAGLQTIILHRPGNGPLSDDQKSNYEVIPDFKSLYSLQLPQK.

Mg(2+) contacts are provided by Asp-14 and Glu-16. Residues Ser-142–Ser-143 and Lys-176 contribute to the substrate site. A Mg(2+)-binding site is contributed by Asp-201.

It belongs to the HAD-like hydrolase superfamily. MasA/MtnC family. Monomer. Mg(2+) serves as cofactor.

The protein resides in the cytoplasm. It is found in the nucleus. It catalyses the reaction 5-methylsulfanyl-2,3-dioxopentyl phosphate + H2O = 1,2-dihydroxy-5-(methylsulfanyl)pent-1-en-3-one + phosphate. The protein operates within amino-acid biosynthesis; L-methionine biosynthesis via salvage pathway; L-methionine from S-methyl-5-thio-alpha-D-ribose 1-phosphate: step 3/6. It functions in the pathway amino-acid biosynthesis; L-methionine biosynthesis via salvage pathway; L-methionine from S-methyl-5-thio-alpha-D-ribose 1-phosphate: step 4/6. Functionally, bifunctional enzyme that catalyzes the enolization of 2,3-diketo-5-methylthiopentyl-1-phosphate (DK-MTP-1-P) into the intermediate 2-hydroxy-3-keto-5-methylthiopentenyl-1-phosphate (HK-MTPenyl-1-P), which is then dephosphorylated to form the acireductone 1,2-dihydroxy-3-keto-5-methylthiopentene (DHK-MTPene). The polypeptide is Enolase-phosphatase E1 (Drosophila ananassae (Fruit fly)).